A 291-amino-acid chain; its full sequence is Small ribosomal subunit biogenesis GTPase RsgA (291 aa).

The 159-residue stretch at 63–221 folds into the CP-type G domain; that stretch reads NNELKRPPVS…IADTPGFSAL (159 aa). GTP contacts are provided by residues 112 to 115 and 164 to 172; these read TKHD and GQSGVGKST. Zn(2+) is bound by residues Cys245, Cys250, His252, and Cys258.

It belongs to the TRAFAC class YlqF/YawG GTPase family. RsgA subfamily. As to quaternary structure, monomer. Associates with 30S ribosomal subunit, binds 16S rRNA. Zn(2+) is required as a cofactor.

It localises to the cytoplasm. Functionally, one of several proteins that assist in the late maturation steps of the functional core of the 30S ribosomal subunit. Helps release RbfA from mature subunits. May play a role in the assembly of ribosomal proteins into the subunit. Circularly permuted GTPase that catalyzes slow GTP hydrolysis, GTPase activity is stimulated by the 30S ribosomal subunit. The chain is Small ribosomal subunit biogenesis GTPase RsgA from Staphylococcus epidermidis (strain ATCC 12228 / FDA PCI 1200).